A 1243-amino-acid polypeptide reads, in one-letter code: Probable phospholipid-transporting ATPase 7 (1243 aa).

Residues 1–74 (MGRRRIRSRI…TTRYNLITFL (74 aa)) lie on the Cytoplasmic side of the membrane. Residues 75–96 (PKCLYEQFHRVANFYFLVAAIL) form a helical membrane-spanning segment. The Extracellular segment spans residues 97-100 (SVFP). Residues 101-123 (LSPFNKWSMIAPLIFVVGLSMGK) traverse the membrane as a helical segment. Over 124-305 (EALEDWRRFM…SRIEKRMDYI (182 aa)) the chain is Cytoplasmic. Residues 306-327 (IYTLFALLVLVSFISSLGFAVM) traverse the membrane as a helical segment. The Extracellular portion of the chain corresponds to 328-359 (TKMHMGDWWYLRPDKPERLTNPRNPFHAWVVH). The helical transmembrane segment at 360 to 377 (LITAVLLYGYLIPISLYV) threads the bilayer. At 378 to 941 (SIELVKVLQA…HGHWCYKRIA (564 aa)) the chain is on the cytoplasmic side. The active-site 4-aspartylphosphate intermediate is D425. K623 is covalently cross-linked (Glycyl lysine isopeptide (Lys-Gly) (interchain with G-Cter in ubiquitin)). 2 residues coordinate Mg(2+): D886 and D890. The chain crosses the membrane as a helical span at residues 942 to 961 (QMICYFFYKNITFGLTLFYF). The Extracellular portion of the chain corresponds to 962–975 (EAFTGFSGQAIYND). A helical transmembrane segment spans residues 976–995 (SYLLLFNVILTSLPVIALGV). Residues 996 to 1025 (FEQDVSSEVCLQFPALYQQGPKNLFFDWYR) are Cytoplasmic-facing. Residues 1026 to 1048 (IIGWMANGVYASVVIFSLNIGIF) form a helical membrane-spanning segment. At 1049–1061 (HVQSFCSGGQTAD) the chain is on the extracellular side. The chain crosses the membrane as a helical span at residues 1062–1084 (MDAMGTAMFTCIIWAVNVQIALT). The Cytoplasmic portion of the chain corresponds to 1085 to 1090 (MSHFTW). Residues 1091–1111 (IQHVLIWGSIVTWYIFLALFG) form a helical membrane-spanning segment. Residues 1112 to 1128 (MLPPKVSGNIFHMLSET) are Extracellular-facing. Residues 1129 to 1153 (LAPAPIFWLTSLLVIAATTLPYLAY) traverse the membrane as a helical segment. The Cytoplasmic segment spans residues 1154 to 1243 (ISFQRSLNPL…TDTTSTTQHS (90 aa)).

The protein belongs to the cation transport ATPase (P-type) (TC 3.A.3) family. Type IV subfamily.

The protein localises to the cell membrane. It localises to the endomembrane system. The catalysed reaction is ATP + H2O + phospholipidSide 1 = ADP + phosphate + phospholipidSide 2.. In terms of biological role, involved in transport of phospholipids and in regulation of pollen plasma membrane lipid asymmetry. The protein is Probable phospholipid-transporting ATPase 7 of Arabidopsis thaliana (Mouse-ear cress).